The chain runs to 348 residues: N-formyl peptide receptor 2 (348 aa).

Asn1 is a glycosylation site (N-linked (GlcNAc...) asparagine). Residues 1–24 are Extracellular-facing; sequence NFSTPLNEHEEVSYESAGYTVLRI. The chain crosses the membrane as a helical span at residues 25–47; it reads LPLVVLGVTFVLGVLGNGLVIWV. The Cytoplasmic portion of the chain corresponds to 48-58; sequence AGFRMTRTVTT. Residues 59–80 traverse the membrane as a helical segment; it reads ICYLNLALADFSFTATLPFLIV. Residues 81 to 97 are Extracellular-facing; it reads SMAMGEKWPFGWFLCKL. Cys95 and Cys173 are disulfide-bonded. A helical transmembrane segment spans residues 98-118; that stretch reads IHIVVDINLFGSVFLIGFIAL. Residues 119–137 lie on the Cytoplasmic side of the membrane; that stretch reads DRCICVLHPVWAQNHRTVS. Residues 138–159 form a helical membrane-spanning segment; that stretch reads LAMKVIVGPWILALVLTLPVFL. The Extracellular segment spans residues 160–202; the sequence is FLTTVTIPNGDTYCTFNFASWGGTPEERQKVAITMLTARGIIR. A helical transmembrane segment spans residues 203-223; that stretch reads FVIGFSLPMSIVAICYGLIAA. At 224–239 the chain is on the cytoplasmic side; sequence KIHKKGMIKSSRPLRV. The chain crosses the membrane as a helical span at residues 240–263; it reads LTAVVASFFICWFPFQLVALLGTV. Topologically, residues 264–283 are extracellular; the sequence is WLKEMLFYGKYKIIDILVNP. A helical transmembrane segment spans residues 284-303; the sequence is TSSLAFFNSCLNPMLYVFVG. Over 304 to 348 the chain is Cytoplasmic; that stretch reads QDFRERLIHSLPTSLERALSEDSAPTNDTAASCASPPAETELQAM. Residues 323-348 form a disordered region; sequence SEDSAPTNDTAASCASPPAETELQAM. Residues 326–335 show a composition bias toward polar residues; that stretch reads SAPTNDTAAS.

This sequence belongs to the G-protein coupled receptor 1 family. In terms of assembly, interacts with APP; the interaction takes place at the cell surface and the complex is then rapidly internalized.

The protein localises to the cell membrane. Its function is as follows. Low affinity receptor for N-formyl-methionyl peptides, which are powerful neutrophil chemotactic factors. Binding of FMLP to the receptor causes activation of neutrophils. This response is mediated via a G-protein that activates a phosphatidylinositol-calcium second messenger system. Receptor for the chemokine-like protein FAM19A5, mediating FAM19A5-stimulated macrophage chemotaxis and the inhibitory effect on TNFSF11/RANKL-induced osteoclast differentiation. This is N-formyl peptide receptor 2 (FPR2) from Gorilla gorilla gorilla (Western lowland gorilla).